Here is a 96-residue protein sequence, read N- to C-terminus: Mitochondrial import inner membrane translocase subunit Tim13-B (96 aa).

Positions 47-70 (CFRKCIGKPGGSLDNSEQKCVAMC) match the Twin CX3C motif motif. Intrachain disulfides connect cysteine 47/cysteine 70 and cysteine 51/cysteine 66.

The protein belongs to the small Tim family. As to quaternary structure, heterohexamer; composed of 3 copies of TIMM8 (TIMM8A or TIMM8B) and 3 copies of TIMM13, named soluble 70 kDa complex. Associates with the TIM22 complex, whose core is composed of TIMM22.

The protein localises to the mitochondrion inner membrane. Functionally, mitochondrial intermembrane chaperone that participates in the import and insertion of some multi-pass transmembrane proteins into the mitochondrial inner membrane. Also required for the transfer of beta-barrel precursors from the TOM complex to the sorting and assembly machinery (SAM complex) of the outer membrane. Acts as a chaperone-like protein that protects the hydrophobic precursors from aggregation and guide them through the mitochondrial intermembrane space. The TIMM8-TIMM13 complex mediates the import of some proteins while the predominant TIMM9-TIMM10 70 kDa complex mediates the import of much more proteins. This Xenopus laevis (African clawed frog) protein is Mitochondrial import inner membrane translocase subunit Tim13-B (timm13-b).